A 452-amino-acid polypeptide reads, in one-letter code: Phosphoglucosamine mutase (452 aa).

The active-site Phosphoserine intermediate is serine 108. Serine 108, aspartate 247, aspartate 249, and aspartate 251 together coordinate Mg(2+). Serine 108 is subject to Phosphoserine.

This sequence belongs to the phosphohexose mutase family. Mg(2+) is required as a cofactor. Post-translationally, activated by phosphorylation.

It carries out the reaction alpha-D-glucosamine 1-phosphate = D-glucosamine 6-phosphate. Functionally, catalyzes the conversion of glucosamine-6-phosphate to glucosamine-1-phosphate. The protein is Phosphoglucosamine mutase of Burkholderia pseudomallei (strain 668).